A 366-amino-acid polypeptide reads, in one-letter code: UDP-N-acetylglucosamine--N-acetylmuramyl-(pentapeptide) pyrophosphoryl-undecaprenol N-acetylglucosamine transferase (366 aa).

Residues 15 to 17 (TGG), Asn-127, Arg-175, Ser-201, Ile-255, and Gln-300 each bind UDP-N-acetyl-alpha-D-glucosamine.

It belongs to the glycosyltransferase 28 family. MurG subfamily.

It localises to the cell inner membrane. It carries out the reaction di-trans,octa-cis-undecaprenyl diphospho-N-acetyl-alpha-D-muramoyl-L-alanyl-D-glutamyl-meso-2,6-diaminopimeloyl-D-alanyl-D-alanine + UDP-N-acetyl-alpha-D-glucosamine = di-trans,octa-cis-undecaprenyl diphospho-[N-acetyl-alpha-D-glucosaminyl-(1-&gt;4)]-N-acetyl-alpha-D-muramoyl-L-alanyl-D-glutamyl-meso-2,6-diaminopimeloyl-D-alanyl-D-alanine + UDP + H(+). It functions in the pathway cell wall biogenesis; peptidoglycan biosynthesis. Functionally, cell wall formation. Catalyzes the transfer of a GlcNAc subunit on undecaprenyl-pyrophosphoryl-MurNAc-pentapeptide (lipid intermediate I) to form undecaprenyl-pyrophosphoryl-MurNAc-(pentapeptide)GlcNAc (lipid intermediate II). The chain is UDP-N-acetylglucosamine--N-acetylmuramyl-(pentapeptide) pyrophosphoryl-undecaprenol N-acetylglucosamine transferase from Thiobacillus denitrificans (strain ATCC 25259 / T1).